A 587-amino-acid chain; its full sequence is Xyloglucan-specific endo-beta-1,4-glucanase BoGH9A (587 aa).

Residues 1–19 form the signal peptide; that stretch reads MKIVRYIALFGILSGLAVA. C20 carries N-palmitoyl cysteine lipidation. A lipid anchor (S-diacylglycerol cysteine) is attached at C20. The Nucleophile role is filled by D185. Residues H511 and D553 contribute to the active site. E562 (proton donor) is an active-site residue.

This sequence belongs to the glycosyl hydrolase 9 (cellulase E) family.

It is found in the cell outer membrane. The catalysed reaction is xyloglucan + H2O = xyloglucan oligosaccharides.. Its pathway is glucan metabolism; xyloglucan degradation. Its function is as follows. Catalyzes endohydrolysis of 1,4-beta-D-glucosidic linkages in xyloglucan with retention of the beta-configuration of the glycosyl residues in xyloglucan degradation. Cleaves the backbone of the 3 major types of natural xyloglucans (seed galactoxyloglucan from tamarind kernel, dicot fucogalactoxyloglucan from lettuce leaves, and solanaceous arabinogalactoxyloglucan from tomato fruit), to produce xyloglucan oligosaccharides. May be superfluous in xyloglucan degradation compared to BoGH5A (AC A7LXT7), the other Xyloglucan-specific endo-beta-1,4-glucanase. In Bacteroides ovatus (strain ATCC 8483 / DSM 1896 / JCM 5824 / BCRC 10623 / CCUG 4943 / NCTC 11153), this protein is Xyloglucan-specific endo-beta-1,4-glucanase BoGH9A.